Reading from the N-terminus, the 429-residue chain is Enolase (429 aa).

Q163 lines the (2R)-2-phosphoglycerate pocket. Residue E205 is the Proton donor of the active site. Residues D242, E287, and D314 each coordinate Mg(2+). (2R)-2-phosphoglycerate is bound by residues K339, R368, S369, and K390. Residue K339 is the Proton acceptor of the active site.

It belongs to the enolase family. Mg(2+) serves as cofactor.

It localises to the cytoplasm. The protein localises to the secreted. The protein resides in the cell surface. The enzyme catalyses (2R)-2-phosphoglycerate = phosphoenolpyruvate + H2O. The protein operates within carbohydrate degradation; glycolysis; pyruvate from D-glyceraldehyde 3-phosphate: step 4/5. In terms of biological role, catalyzes the reversible conversion of 2-phosphoglycerate (2-PG) into phosphoenolpyruvate (PEP). It is essential for the degradation of carbohydrates via glycolysis. This Cupriavidus taiwanensis (strain DSM 17343 / BCRC 17206 / CCUG 44338 / CIP 107171 / LMG 19424 / R1) (Ralstonia taiwanensis (strain LMG 19424)) protein is Enolase.